The primary structure comprises 119 residues: Small ribosomal subunit protein uS13m (119 aa).

It belongs to the universal ribosomal protein uS13 family. Part of the small ribosomal subunit.

The protein resides in the mitochondrion. Located at the top of the head of the small subunit, it contacts several helices of the small subunit rRNA. The chain is Small ribosomal subunit protein uS13m (RPS13) from Prototheca wickerhamii.